The primary structure comprises 165 residues: MSKARNNKKSKLSKAKSNRRLAENRYARHQYEILEDIEAGIELLGTEVKSIRAGNVNLRDGFCLIREGSLLLHNVHISPFNNAGSFFNHEPLRVRKLLAHRKEINKLETQVNRKGLTLVPLNIFLKGSWIKITIGLGKGRKLHDKRENEKRKQSEREVKSALARY.

The segment at 141-165 is disordered; sequence KLHDKRENEKRKQSEREVKSALARY. Basic and acidic residues predominate over residues 144 to 159; that stretch reads DKRENEKRKQSEREVK.

The protein belongs to the SmpB family.

The protein resides in the cytoplasm. Its function is as follows. Required for rescue of stalled ribosomes mediated by trans-translation. Binds to transfer-messenger RNA (tmRNA), required for stable association of tmRNA with ribosomes. tmRNA and SmpB together mimic tRNA shape, replacing the anticodon stem-loop with SmpB. tmRNA is encoded by the ssrA gene; the 2 termini fold to resemble tRNA(Ala) and it encodes a 'tag peptide', a short internal open reading frame. During trans-translation Ala-aminoacylated tmRNA acts like a tRNA, entering the A-site of stalled ribosomes, displacing the stalled mRNA. The ribosome then switches to translate the ORF on the tmRNA; the nascent peptide is terminated with the 'tag peptide' encoded by the tmRNA and targeted for degradation. The ribosome is freed to recommence translation, which seems to be the essential function of trans-translation. The protein is SsrA-binding protein of Prochlorococcus marinus (strain SARG / CCMP1375 / SS120).